A 212-amino-acid chain; its full sequence is Adenylate kinase (212 aa).

An ATP-binding site is contributed by 10 to 15; it reads GAGKGT. Residues 30–59 form an NMP region; the sequence is STGDMFRAAIANQTEMGVLAKSYIDKGELV. AMP-binding positions include threonine 31, arginine 36, 57–59, 86–89, and glutamine 93; these read ELV and GYPR. The segment at 127–159 is LID; sequence GRIIHRETGETFHKVFNPPADYKEEDYYQREDD. ATP-binding positions include arginine 128 and 137–138; that span reads TF. AMP-binding residues include arginine 156 and arginine 167. Residue glutamine 195 coordinates ATP.

Belongs to the adenylate kinase family. In terms of assembly, monomer.

Its subcellular location is the cytoplasm. It catalyses the reaction AMP + ATP = 2 ADP. It participates in purine metabolism; AMP biosynthesis via salvage pathway; AMP from ADP: step 1/1. Its function is as follows. Catalyzes the reversible transfer of the terminal phosphate group between ATP and AMP. Plays an important role in cellular energy homeostasis and in adenine nucleotide metabolism. This chain is Adenylate kinase, found in Streptococcus sanguinis (strain SK36).